We begin with the raw amino-acid sequence, 233 residues long: tRNA (guanine-N(7)-)-methyltransferase (233 aa).

S-adenosyl-L-methionine is bound by residues E62, E87, D114, and D136. Residue D136 is part of the active site. Residues K140, D172, and 211–214 (TRYE) contribute to the substrate site.

It belongs to the class I-like SAM-binding methyltransferase superfamily. TrmB family.

The enzyme catalyses guanosine(46) in tRNA + S-adenosyl-L-methionine = N(7)-methylguanosine(46) in tRNA + S-adenosyl-L-homocysteine. It functions in the pathway tRNA modification; N(7)-methylguanine-tRNA biosynthesis. Catalyzes the formation of N(7)-methylguanine at position 46 (m7G46) in tRNA. This is tRNA (guanine-N(7)-)-methyltransferase from Erythrobacter litoralis (strain HTCC2594).